A 1433-amino-acid polypeptide reads, in one-letter code: Bacillopeptidase F (1433 aa).

An N-terminal signal peptide occupies residues 1-30; it reads MRKKTKNRLISSVLSTVVISSLLFPGAAGA. A propeptide spanning residues 31-194 is cleaved from the precursor; sequence SSKVTSPSVK…NMKKAQKAIK (164 aa). The Inhibitor I9 domain occupies 68-177; sequence TFLIKFKDLA…KVLPNEKRQL (110 aa). The Peptidase S8 domain occupies 200 to 512; it reads EWNVDQIDAP…HGLVNAFDAV (313 aa). Active-site charge relay system residues include aspartate 227, histidine 274, and serine 452. Residues 756–1433 constitute a propeptide that is removed on maturation; the sequence is SAYKGQNIQV…NGKLNMNTEN (678 aa). The disordered stretch occupies residues 800–830; sequence KLGVEKPSGKQKKKPVNPKKAKPSANTAVKH. A compositionally biased stretch (basic residues) spans 808–821; that stretch reads GKQKKKPVNPKKAK.

This sequence belongs to the peptidase S8 family.

Its subcellular location is the secreted. The chain is Bacillopeptidase F (bpr) from Bacillus subtilis (strain 168).